The sequence spans 132 residues: Small ribosomal subunit protein uS8 (132 aa).

This sequence belongs to the universal ribosomal protein uS8 family. As to quaternary structure, part of the 30S ribosomal subunit. Contacts proteins S5 and S12.

One of the primary rRNA binding proteins, it binds directly to 16S rRNA central domain where it helps coordinate assembly of the platform of the 30S subunit. The protein is Small ribosomal subunit protein uS8 of Baumannia cicadellinicola subsp. Homalodisca coagulata.